Reading from the N-terminus, the 295-residue chain is Universal stress protein Mb2028c (295 aa).

Residues Gly13, 117–123 (GSSGRGA), 131–132 (SV), Gly165, Asp198, 262–268 (GSHGRGG), and 276–278 (SVS) each bind ATP.

This sequence belongs to the universal stress protein A family.

The protein is Universal stress protein Mb2028c of Mycobacterium bovis (strain ATCC BAA-935 / AF2122/97).